Reading from the N-terminus, the 387-residue chain is Zinc finger protein neuro-d4 (387 aa).

Glycyl lysine isopeptide (Lys-Gly) (interchain with G-Cter in SUMO2) cross-links involve residues lysine 106, lysine 129, and lysine 133. A C2H2-type zinc finger spans residues 195–218; it reads YVCDICGKRYKNRPGLSYHYTHTH. PHD-type zinc fingers lie at residues 271-328 and 325-375; these read NGYC…CKSC and CKSC…CLRH. Zn(2+)-binding residues include cysteine 274, cysteine 277, cysteine 293, cysteine 296, histidine 301, cysteine 304, cysteine 322, cysteine 325, cysteine 328, cysteine 331, cysteine 343, cysteine 346, histidine 351, cysteine 354, cysteine 369, and cysteine 372.

It belongs to the requiem/DPF family. In terms of assembly, component of neuron-specific chromatin remodeling complex (nBAF complex) composed of at least, ARID1A/BAF250A or ARID1B/BAF250B, SMARCD1/BAF60A, SMARCD3/BAF60C, SMARCA2/BRM/BAF190B, SMARCA4/BRG1/BAF190A, SMARCB1/BAF47, SMARCC1/BAF155, SMARCE1/BAF57, SMARCC2/BAF170, DPF1/BAF45B, DPF3/BAF45C, ACTL6B/BAF53B and actin. In terms of tissue distribution, at embryonic stages, predominant expression in the nervous system. Expressed specifically in postmitotic neurons (at protein level).

The protein localises to the cytoplasm. It is found in the nucleus. In terms of biological role, may have an important role in developing neurons by participating in regulation of cell survival, possibly as a neurospecific transcription factor. Belongs to the neuron-specific chromatin remodeling complex (nBAF complex). During neural development a switch from a stem/progenitor to a postmitotic chromatin remodeling mechanism occurs as neurons exit the cell cycle and become committed to their adult state. The transition from proliferating neural stem/progenitor cells to postmitotic neurons requires a switch in subunit composition of the npBAF and nBAF complexes. As neural progenitors exit mitosis and differentiate into neurons, npBAF complexes which contain ACTL6A/BAF53A and PHF10/BAF45A, are exchanged for homologous alternative ACTL6B/BAF53B and DPF1/BAF45B or DPF3/BAF45C subunits in neuron-specific complexes (nBAF). The npBAF complex is essential for the self-renewal/proliferative capacity of the multipotent neural stem cells. The nBAF complex along with CREST plays a role regulating the activity of genes essential for dendrite growth. In Mus musculus (Mouse), this protein is Zinc finger protein neuro-d4.